The primary structure comprises 50 residues: Protein PndA (50 aa).

A helical membrane pass occupies residues 5 to 25 (TFLMMLIVICVTILCFVWMVR).

The protein belongs to the Hok/Gef family.

Its subcellular location is the cell inner membrane. Functionally, toxic component of a type I toxin-antitoxin (TA) system. When expressed is involved in cellular Mg(2+) release and degradation of stable RNA. This is Protein PndA (pndA) from Escherichia coli.